The primary structure comprises 263 residues: Hydroxyethylthiazole kinase (263 aa).

M39 is a substrate binding site. The ATP site is built by K115 and T160. A substrate-binding site is contributed by G187.

This sequence belongs to the Thz kinase family. The cofactor is Mg(2+).

It carries out the reaction 5-(2-hydroxyethyl)-4-methylthiazole + ATP = 4-methyl-5-(2-phosphooxyethyl)-thiazole + ADP + H(+). The protein operates within cofactor biosynthesis; thiamine diphosphate biosynthesis; 4-methyl-5-(2-phosphoethyl)-thiazole from 5-(2-hydroxyethyl)-4-methylthiazole: step 1/1. Functionally, catalyzes the phosphorylation of the hydroxyl group of 4-methyl-5-beta-hydroxyethylthiazole (THZ). This chain is Hydroxyethylthiazole kinase, found in Staphylococcus haemolyticus (strain JCSC1435).